The chain runs to 385 residues: Serine/threonine-protein kinase 52 (385 aa).

The region spanning 82 to 356 is the Protein kinase domain; it reads LIIKTVLARG…PEMDEVVPML (275 aa). ATP contacts are provided by residues 88–96 and K109; that span reads LARGTFGTV. Catalysis depends on D227, which acts as the Proton acceptor.

The protein belongs to the protein kinase superfamily. Ser/Thr protein kinase family. Binds to CBC1. Associates with PHOT1, PHOT2, BLUS1 and PM H(+)-ATPase (e.g. AHA1). Autophosphorylated. Phosphorylated by HT1 in response to low CO(2) concentrations. As to expression, expressed in guard cells.

It is found in the cytoplasm. The protein localises to the cytosol. It carries out the reaction L-seryl-[protein] + ATP = O-phospho-L-seryl-[protein] + ADP + H(+). The catalysed reaction is L-threonyl-[protein] + ATP = O-phospho-L-threonyl-[protein] + ADP + H(+). Serine/threonine protein kinase that phosphorylates proteins on serine and threonine residues. Collectively with CBC1, acts as a negative regulator of stomatal opening, probably via the inhibition of plasma membrane-type ATPases (AHA1 and AHA2) activity in guard cells, but in an abscisic acid (ABA)-independent manner. However, at low concentrations of CO(2), together with CBC1, stimulates stomatal opening via the inhibition of S-type anion channels in response to blue light (BL) and red light (RL), thus being a key component to maximize photosynthesis in the light under low CO(2) conditions. Required for temperature decrease in leaves. Downstream target of HIGH LEAF TEMPERATURE1 (HT1) during low CO(2)-induced stomatal opening. The sequence is that of Serine/threonine-protein kinase 52 from Arabidopsis thaliana (Mouse-ear cress).